A 316-amino-acid chain; its full sequence is Bifunctional riboflavin kinase/FMN adenylyltransferase (316 aa).

This sequence belongs to the RibF family.

The catalysed reaction is riboflavin + ATP = FMN + ADP + H(+). The enzyme catalyses FMN + ATP + H(+) = FAD + diphosphate. The protein operates within cofactor biosynthesis; FAD biosynthesis; FAD from FMN: step 1/1. It functions in the pathway cofactor biosynthesis; FMN biosynthesis; FMN from riboflavin (ATP route): step 1/1. In terms of biological role, catalyzes the phosphorylation of riboflavin to FMN followed by the adenylation of FMN to FAD. The chain is Bifunctional riboflavin kinase/FMN adenylyltransferase (ribC) from Bacillus subtilis (strain 168).